Consider the following 869-residue polypeptide: Facilitated trehalose transporter Tret1 (869 aa).

Disordered regions lie at residues 1–214 (MSGR…QKAT) and 258–315 (KESS…LIHR). Residues 1–404 (MSGRDNRGAG…VYRPTTNPIY (404 aa)) are Cytoplasmic-facing. A compositionally biased stretch (basic and acidic residues) spans 25 to 43 (KLKEKLTRAGDDQGYHRVE). Composition is skewed to low complexity over residues 44–57 (SNLS…SLDT), 79–92 (PQQQ…QQLR), and 118–127 (PFQQQQQRTP). Composition is skewed to basic and acidic residues over residues 147-156 (EIREHRDRQQ) and 258-291 (KESS…KLDK). Phosphoserine is present on residues serine 260, serine 261, serine 262, serine 332, and serine 334. The segment at 336 to 368 (EDFHTSRQHFQQQRSISTDSRKSRRPYEMDEMG) is disordered. Polar residues predominate over residues 343-353 (QHFQQQRSIST). Basic and acidic residues predominate over residues 354–368 (DSRKSRRPYEMDEMG). Residues 405–425 (IWTQVLAALSVSLGSLVVGFV) traverse the membrane as a helical segment. Residues 426-452 (SAYTSPALVSMTNRNMTSFEVTPQAAS) lie on the Extracellular side of the membrane. N-linked (GlcNAc...) asparagine glycosylation is present at asparagine 440. The helical transmembrane segment at 453–473 (WVGGIMPLAGLAGGIAGGPFI) threads the bilayer. Topologically, residues 474 to 485 (EYLGRRNTILAT) are cytoplasmic. The chain crosses the membrane as a helical span at residues 486–506 (AIPFIVSSLLIACAVNVAMVL). At 507 to 509 (AGR) the chain is on the extracellular side. A helical transmembrane segment spans residues 510–530 (FLAGFCVGIASLSLPVYLGET). Over 531-536 (VQPEVR) the chain is Cytoplasmic. Residues 537-557 (GTLGLLPTAFGNIGILLCFVA) traverse the membrane as a helical segment. Residues 558–564 (GTYMDWS) are Extracellular-facing. Residues 565–585 (MLAFLGAALPVPFLILMFLIP) form a helical membrane-spanning segment. Over 586-654 (ETPRWFVSRG…NLKPLSISLG (69 aa)) the chain is Cytoplasmic. Residues 655–675 (LMFFQQLSGINAVIFYTVSIF) form a helical membrane-spanning segment. Over 676–685 (KDAGSTIDGN) the chain is Extracellular. A helical transmembrane segment spans residues 686–706 (LCTIIVGIVNFMATFIATLLI). At 707 to 712 (DRAGRK) the chain is on the cytoplasmic side. Residues 713–733 (ILLYVSNIAMIITLFVLGGFF) form a helical membrane-spanning segment. Residues 734–752 (YCKSHGQDVSQLGWLPLSC) lie on the Extracellular side of the membrane. A helical membrane pass occupies residues 753-773 (FVIYILGFSLGFGPIPWLMMG). Over 774–779 (EILPSK) the chain is Cytoplasmic. A helical transmembrane segment spans residues 780-800 (IRGSAASVATAFNWSCTFVVT). Residues 801–813 (KTFQDMIDFMGAH) are Extracellular-facing. A helical membrane pass occupies residues 814–834 (GAFWLFGSICFIGLFFVILYV). The Cytoplasmic portion of the chain corresponds to 835-869 (PETQGKTLEDIERKMMGRVRRMSSVANMKPLAFNM). 2 positions are modified to phosphoserine: serine 857 and serine 858.

This sequence belongs to the major facilitator superfamily. Sugar transporter (TC 2.A.1.1) family. Trehalose transporter subfamily.

The protein localises to the cell membrane. Low-capacity facilitative transporter for trehalose. Does not transport maltose, sucrose or lactose. Mediates the bidirectional transfer of trehalose. Responsible for the transport of trehalose synthesized in the fat body and the incorporation of trehalose into other tissues that require a carbon source, thereby regulating trehalose levels in the hemolymph. The chain is Facilitated trehalose transporter Tret1 from Drosophila persimilis (Fruit fly).